Consider the following 189-residue polypeptide: Thioredoxin-like protein CITRX, chloroplastic (189 aa).

The transit peptide at 1–36 directs the protein to the chloroplast; sequence MAMAAAASLLPACAAPTLPGRAFRPRRNSTPTASLS. A Thioredoxin domain is found at 72–189; that stretch reads GSGKYIAPDY…MIRNIIDNEL (118 aa). Catalysis depends on nucleophile residues C112 and C115. C112 and C115 are disulfide-bonded.

It belongs to the thioredoxin family. Plant CITRX-type subfamily.

Its subcellular location is the plastid. The protein resides in the chloroplast. In terms of biological role, probable thiol-disulfide oxidoreductase that may play a role in proper chloroplast development. This chain is Thioredoxin-like protein CITRX, chloroplastic, found in Oryza sativa subsp. indica (Rice).